Reading from the N-terminus, the 157-residue chain is Transcription elongation factor GreA (157 aa).

Belongs to the GreA/GreB family.

Necessary for efficient RNA polymerase transcription elongation past template-encoded arresting sites. The arresting sites in DNA have the property of trapping a certain fraction of elongating RNA polymerases that pass through, resulting in locked ternary complexes. Cleavage of the nascent transcript by cleavage factors such as GreA or GreB allows the resumption of elongation from the new 3'terminus. GreA releases sequences of 2 to 3 nucleotides. The chain is Transcription elongation factor GreA from Phenylobacterium zucineum (strain HLK1).